Here is a 1258-residue protein sequence, read N- to C-terminus: Phospholipid-transporting ATPase C887.12 (1258 aa).

Disordered stretches follow at residues 1–41 (MARD…LGED) and 53–83 (YISS…SKAN). The Cytoplasmic segment spans residues 1 to 183 (MARDVDNKQN…PKFLKEQFSK (183 aa)). The span at 53–64 (YISSSGQNSTNP) shows a compositional bias: polar residues. The helical transmembrane segment at 184–204 (YANLFFLFTAVVQQIPGITPV) threads the bilayer. Residues 205–208 (NRYT) are Lumenal-facing. A helical transmembrane segment spans residues 209–229 (TIGPMLIVLSVSGIKEIMEDI). The Cytoplasmic segment spans residues 230-406 (KRKKQDQELN…TSVEKQVNSQ (177 aa)). The helical transmembrane segment at 407 to 427 (ILFLLCIFVFLCFASSLGALI) threads the bilayer. The Lumenal portion of the chain corresponds to 428–451 (HRSVYGSALSYVKYTSNRAGMFFK). A helical membrane pass occupies residues 452 to 472 (GLLTFWILYSNLVPISLFVTF). The Cytoplasmic segment spans residues 473 to 974 (ELVRYIQAQL…KLILYSFYKN (502 aa)). Aspartate 518 acts as the 4-aspartylphosphate intermediate in catalysis. Positions 518, 519, 520, 613, 654, 656, 659, 677, 710, 711, 790, 791, 792, 883, and 889 each coordinate ATP. Aspartate 518 contacts Mg(2+). Position 520 (threonine 520) interacts with Mg(2+). Aspartate 909 contacts Mg(2+). ATP contacts are provided by asparagine 912 and aspartate 913. A Mg(2+)-binding site is contributed by aspartate 913. A helical membrane pass occupies residues 975 to 995 (IALYMTQFWYAFCNAFSGQVI). Residues 996-998 (FES) lie on the Lumenal side of the membrane. Residues 999–1019 (WSISLYNVLFTVLPPVVIGIF) traverse the membrane as a helical segment. The Cytoplasmic portion of the chain corresponds to 1020–1051 (DQFVSAGQLFQYPQLYQLGQRSEFFNLKRFWS). Residues 1052–1072 (WITNGFYHSLLLFLCSIAVFY) traverse the membrane as a helical segment. The Lumenal portion of the chain corresponds to 1073-1086 (YDGPNKDGLASGHW). Residues 1087–1107 (VWGTTLYAAILATVLGKAALI) form a helical membrane-spanning segment. Lysine 1103 provides a ligand contact to a 1,2-diacyl-sn-glycero-3-phospho-(1D-myo-inositol 4-phosphate). The Cytoplasmic portion of the chain corresponds to 1108–1115 (SNHWTQYT). Residues 1116–1136 (VIATLGSFLLWIVFMPIYAVA) traverse the membrane as a helical segment. The Lumenal portion of the chain corresponds to 1137-1148 (APAIGFSKEYYG). A helical transmembrane segment spans residues 1149 to 1169 (IIPHLYGNLKFWASLLVLPTI). At 1170–1258 (ALMRDFVWKY…HTRGAYGEMR (89 aa)) the chain is on the cytoplasmic side. A 1,2-diacyl-sn-glycero-3-phospho-(1D-myo-inositol 4-phosphate) is bound by residues arginine 1173, tryptophan 1177, lysine 1178, tyrosine 1189, and histidine 1190.

This sequence belongs to the cation transport ATPase (P-type) (TC 3.A.3) family. Type IV subfamily. The cofactor is Mg(2+).

Its subcellular location is the endoplasmic reticulum membrane. The protein localises to the golgi apparatus. It localises to the trans-Golgi network membrane. The catalysed reaction is ATP + H2O + phospholipidSide 1 = ADP + phosphate + phospholipidSide 2.. The enzyme catalyses a 1,2-diacyl-sn-glycero-3-phospho-L-serine(out) + ATP + H2O = a 1,2-diacyl-sn-glycero-3-phospho-L-serine(in) + ADP + phosphate + H(+). It carries out the reaction a 1,2-diacyl-sn-glycero-3-phosphoethanolamine(out) + ATP + H2O = a 1,2-diacyl-sn-glycero-3-phosphoethanolamine(in) + ADP + phosphate + H(+). Catalytic component of a P4-ATPase flippase complex which catalyzes the hydrolysis of ATP coupled to the transport of phosphatidylserine and small amounts of ethanolamine from the lumen to the cytosolic leaflet of the trans-Golgi network and ensures the maintenance of asymmetric distribution of phospholipids. The chain is Phospholipid-transporting ATPase C887.12 from Schizosaccharomyces pombe (strain 972 / ATCC 24843) (Fission yeast).